Consider the following 241-residue polypeptide: 1-(5-phosphoribosyl)-5-[(5-phosphoribosylamino)methylideneamino] imidazole-4-carboxamide isomerase (241 aa).

D7 acts as the Proton acceptor in catalysis. D129 (proton donor) is an active-site residue.

This sequence belongs to the HisA/HisF family.

The protein resides in the cytoplasm. It catalyses the reaction 1-(5-phospho-beta-D-ribosyl)-5-[(5-phospho-beta-D-ribosylamino)methylideneamino]imidazole-4-carboxamide = 5-[(5-phospho-1-deoxy-D-ribulos-1-ylimino)methylamino]-1-(5-phospho-beta-D-ribosyl)imidazole-4-carboxamide. It participates in amino-acid biosynthesis; L-histidine biosynthesis; L-histidine from 5-phospho-alpha-D-ribose 1-diphosphate: step 4/9. The polypeptide is 1-(5-phosphoribosyl)-5-[(5-phosphoribosylamino)methylideneamino] imidazole-4-carboxamide isomerase (Buchnera aphidicola subsp. Baizongia pistaciae (strain Bp)).